Consider the following 189-residue polypeptide: UPF0301 protein RAF_ORF0041 (189 aa).

It belongs to the UPF0301 (AlgH) family.

The polypeptide is UPF0301 protein RAF_ORF0041 (Rickettsia africae (strain ESF-5)).